A 421-amino-acid polypeptide reads, in one-letter code: Histidine--tRNA ligase (421 aa).

Belongs to the class-II aminoacyl-tRNA synthetase family. As to quaternary structure, homodimer.

Its subcellular location is the cytoplasm. It carries out the reaction tRNA(His) + L-histidine + ATP = L-histidyl-tRNA(His) + AMP + diphosphate + H(+). The polypeptide is Histidine--tRNA ligase (Fervidobacterium nodosum (strain ATCC 35602 / DSM 5306 / Rt17-B1)).